A 298-amino-acid polypeptide reads, in one-letter code: 3-deoxy-manno-octulosonate cytidylyltransferase (298 aa).

A helical membrane pass occupies residues 22–42 (VWVLHGLALGAAAAAAAVAYL).

This sequence belongs to the KdsB family. Requires Mg(2+) as cofactor. In terms of tissue distribution, ubiquitous.

It localises to the membrane. The catalysed reaction is 3-deoxy-alpha-D-manno-oct-2-ulosonate + CTP = CMP-3-deoxy-beta-D-manno-octulosonate + diphosphate. It functions in the pathway nucleotide-sugar biosynthesis; CMP-3-deoxy-D-manno-octulosonate biosynthesis; CMP-3-deoxy-D-manno-octulosonate from 3-deoxy-D-manno-octulosonate and CTP: step 1/1. Functionally, catalyzes the production of the sugar nucleotide CMP-3-deoxy-D-manno-octulosonate (CMP-KDO). CTP is the preferred nucleotide donor, and it can partially be replaced with UTP but not with ATP. Activates KDO during the biosynthesis of rhamnogalacturonan II (RG-II), a structurally complex pectic polysaccharide of the primary cell wall. RG-II is essential for the cell wall integrity of rapidly growing tissues and pollen tube growth and elongation. The polypeptide is 3-deoxy-manno-octulosonate cytidylyltransferase (Zea mays (Maize)).